A 414-amino-acid polypeptide reads, in one-letter code: Isocitrate dehydrogenase [NADP] cytoplasmic (414 aa).

Position 2 is an N-acetylserine (serine 2). Tyrosine 42 is modified (phosphotyrosine). An NADP(+)-binding site is contributed by 75–77; that stretch reads TIT. Threonine 77 provides a ligand contact to substrate. Lysine 81 bears the N6-acetyllysine mark. Arginine 82 is an NADP(+) binding site. Residues 94–100 and arginine 109 contribute to the substrate site; that span reads SPNGTIR. At lysine 126 the chain carries N6-succinyllysine. 2 residues coordinate substrate: arginine 132 and lysine 212. Residues lysine 224 and lysine 233 each carry the N6-acetyllysine modification. Residue aspartate 252 participates in Mn(2+) binding. NADP(+) is bound at residue lysine 260. The Mn(2+) site is built by aspartate 275 and aspartate 279. 310 to 315 provides a ligand contact to NADP(+); the sequence is GTVTRH. N6-acetyllysine is present on lysine 321. An NADP(+)-binding site is contributed by asparagine 328. At serine 389 the chain carries Phosphoserine. Residue lysine 400 is modified to N6-succinyllysine.

Belongs to the isocitrate and isopropylmalate dehydrogenases family. Homodimer. The cofactor is Mg(2+). Mn(2+) serves as cofactor. In terms of processing, acetylation at Lys-374 dramatically reduces catalytic activity.

Its subcellular location is the cytoplasm. The protein localises to the cytosol. The enzyme catalyses D-threo-isocitrate + NADP(+) = 2-oxoglutarate + CO2 + NADPH. Catalyzes the NADP(+)-dependent oxidative decarboxylation of isocitrate (D-threo-isocitrate) to 2-ketoglutarate (2-oxoglutarate), which is required by other enzymes such as the phytanoyl-CoA dioxygenase. Plays a critical role in the generation of NADPH, an important cofactor in many biosynthesis pathways. May act as a corneal epithelial crystallin and may be involved in maintaining corneal epithelial transparency. In Ovis aries (Sheep), this protein is Isocitrate dehydrogenase [NADP] cytoplasmic (IDH1).